Reading from the N-terminus, the 362-residue chain is Aspartate carbamoyltransferase catalytic subunit (362 aa).

The tract at residues 1-22 (MPKTAMTDSTSKTSTNTASSDM) is disordered. Residues 7 to 20 (TDSTSKTSTNTASS) show a composition bias toward low complexity. Carbamoyl phosphate-binding residues include Arg100 and Thr101. Residue Lys128 participates in L-aspartate binding. Residues Arg150, His180, and Gln183 each contribute to the carbamoyl phosphate site. Residues Arg214 and Arg269 each coordinate L-aspartate. Gly310 and Pro311 together coordinate carbamoyl phosphate.

It belongs to the aspartate/ornithine carbamoyltransferase superfamily. ATCase family. Heterododecamer (2C3:3R2) of six catalytic PyrB chains organized as two trimers (C3), and six regulatory PyrI chains organized as three dimers (R2).

It catalyses the reaction carbamoyl phosphate + L-aspartate = N-carbamoyl-L-aspartate + phosphate + H(+). The protein operates within pyrimidine metabolism; UMP biosynthesis via de novo pathway; (S)-dihydroorotate from bicarbonate: step 2/3. In terms of biological role, catalyzes the condensation of carbamoyl phosphate and aspartate to form carbamoyl aspartate and inorganic phosphate, the committed step in the de novo pyrimidine nucleotide biosynthesis pathway. In Psychrobacter sp. (strain PRwf-1), this protein is Aspartate carbamoyltransferase catalytic subunit.